A 244-amino-acid chain; its full sequence is MAPTKKVPQVPETVLKRRKQRADARTKAAQHKVTVAAKNKEKKTQYFKRAEKYVQEYRNAQKEGLRLKREAEAKGDFYVPAEHKVAFVVRIRGINQLHPKPRKALQILRLRQINNGVFVKLNKATLPLLRIIEPYVAWGYPNNKTIHDLLYKRGYAKVDGNRVPITDNTIVEQSLGKFNIICLEDLAHEIATVGPHFKEATNFLWPFKLNNPTGGWTKKTNHFVEGGDFGNREDQINNLLRKMV.

The interval Met1–Ala37 is disordered.

This sequence belongs to the universal ribosomal protein uL30 family.

Its function is as follows. Binds to G-rich structures in 28S rRNA and in mRNAs. Plays a regulatory role in the translation apparatus; inhibits cell-free translation of mRNAs. This chain is Large ribosomal subunit protein uL30 (rpl-7), found in Caenorhabditis elegans.